Here is a 184-residue protein sequence, read N- to C-terminus: Ribosome-recycling factor (184 aa).

The protein belongs to the RRF family.

It localises to the cytoplasm. Functionally, responsible for the release of ribosomes from messenger RNA at the termination of protein biosynthesis. May increase the efficiency of translation by recycling ribosomes from one round of translation to another. This is Ribosome-recycling factor from Acinetobacter baumannii (strain AB307-0294).